A 166-amino-acid chain; its full sequence is Cold-inducible RNA-binding protein (166 aa).

An RRM domain is found at Gly6–Lys84. Residues Asn68 to Glu166 form a disordered region. A compositionally biased stretch (gly residues) spans Tyr93–Gly120. Residues Ser121 to Glu166 show a composition bias toward low complexity.

As to quaternary structure, interacts with prmt1. Interacts with elavl1/elrA (via RRM3). Associates with ribosomes. In terms of processing, methylated on arginine residues within RGG motifs. Methylation by prmt1 promotes cytoplasmic accumulation.

It is found in the nucleus. It localises to the nucleoplasm. The protein localises to the cytoplasm. In terms of biological role, cold-inducible mRNA binding protein. Acts cooperatively with elavl1/elrA to stabilize AU-rich element (ARE)-containing mRNAs by binding to themm and inhibiting their deadenylation. Essential for embryonic gastrulation and neural development, acting to maintain the expression of a set of adhesion molecules, and cell movement during embryogenesis. Required for pronephros development. The protein is Cold-inducible RNA-binding protein of Xenopus tropicalis (Western clawed frog).